Here is a 152-residue protein sequence, read N- to C-terminus: SUZ RNA-binding domain-containing (152 aa).

The residue at position 1 (Met1) is an N-acetylmethionine. The segment at 30-152 (TQKESRKSKS…DGSQGFKQRR (123 aa)) is disordered. Ser37, Ser39, and Ser51 each carry phosphoserine. Positions 42–107 (KVPIVIQDDS…ARKRILGSAS (66 aa)) constitute an SUZ domain. The span at 66–81 (PTSNGVVSSPNSTSRP) shows a compositional bias: polar residues. Over residues 89-100 (AQREAEYAEARK) the composition is skewed to basic and acidic residues. Residues Ser105 and Ser107 each carry the phosphoserine modification. One can recognise an SUZ-C domain in the interval 111–152 (EQEKPILDRPTRISQPEDSRQPNNVIRQPLGPDGSQGFKQRR). Positions 113–130 (EKPILDRPTRISQPEDSR) are enriched in basic and acidic residues.

The protein belongs to the SZRD1 family.

The sequence is that of SUZ RNA-binding domain-containing (SZRD1) from Homo sapiens (Human).